Consider the following 391-residue polypeptide: 3-ketoacyl-CoA thiolase (391 aa).

Cys-95 functions as the Acyl-thioester intermediate in the catalytic mechanism. Active-site proton acceptor residues include His-347 and Cys-377.

Belongs to the thiolase-like superfamily. Thiolase family. In terms of assembly, heterotetramer of two alpha chains (FadB) and two beta chains (FadA).

The protein resides in the cytoplasm. The catalysed reaction is an acyl-CoA + acetyl-CoA = a 3-oxoacyl-CoA + CoA. It participates in lipid metabolism; fatty acid beta-oxidation. Functionally, catalyzes the final step of fatty acid oxidation in which acetyl-CoA is released and the CoA ester of a fatty acid two carbons shorter is formed. This chain is 3-ketoacyl-CoA thiolase, found in Saccharophagus degradans (strain 2-40 / ATCC 43961 / DSM 17024).